A 369-amino-acid polypeptide reads, in one-letter code: Chaperone protein DnaJ (369 aa).

In terms of domain architecture, J spans 4 to 69; it reads SYYEILEVEK…KKRALYDRYG (66 aa). The segment at 130–207 adopts a CR-type zinc-finger fold; that stretch reads GCKKTIKVQY…CKGKTYILKD (78 aa). Zn(2+)-binding residues include Cys143, Cys146, Cys159, Cys162, Cys181, Cys184, Cys195, and Cys198. CXXCXGXG motif repeat units lie at residues 143 to 150, 159 to 166, 181 to 188, and 195 to 202; these read CESCDGTG, CKQCNGQG, CGACQGKG, and CQACKGKT.

This sequence belongs to the DnaJ family. In terms of assembly, homodimer. Zn(2+) serves as cofactor.

It localises to the cytoplasm. Participates actively in the response to hyperosmotic and heat shock by preventing the aggregation of stress-denatured proteins and by disaggregating proteins, also in an autonomous, DnaK-independent fashion. Unfolded proteins bind initially to DnaJ; upon interaction with the DnaJ-bound protein, DnaK hydrolyzes its bound ATP, resulting in the formation of a stable complex. GrpE releases ADP from DnaK; ATP binding to DnaK triggers the release of the substrate protein, thus completing the reaction cycle. Several rounds of ATP-dependent interactions between DnaJ, DnaK and GrpE are required for fully efficient folding. Also involved, together with DnaK and GrpE, in the DNA replication of plasmids through activation of initiation proteins. In Helicobacter pylori (strain ATCC 700392 / 26695) (Campylobacter pylori), this protein is Chaperone protein DnaJ.